Reading from the N-terminus, the 396-residue chain is MAKKIVSDLDLKGKVVLERADFNVPLKDGKITNDNRIVQALPTIKYIIEQGGKLVLFSHLGKVKQESDKEGLTLKPVADALSEKLGKEVTFVPETRGKKLESAIKNLSEGDVLLVENTRFEDLDGKKESKNDPELGKYWASLGDVFVNDAFGTAHREHASNVGISTHLETAAGYLMEKEIKFIGGVVNDPHKPVVAILGGAKVSDKIGVIKNLVNIADKILIGGGMAYTFLKAQGKEIGLSLLEEDKIDFAKELLESNGDQIVLPVDAKVAKEFSNDAEITEVSIDNIPSDQEAMDVGPKTVELFSKELEGAHTVVWNGPMGVFEFSNFAQGTIGVCKAIANLKDATTIIGGGDSAAAAISLGFEDDFTHISTGGGASLEYLEGIELPGIKAINDK.

Residues 21 to 23 (DFN), arginine 36, 59 to 62 (HLGK), arginine 119, and arginine 156 each bind substrate. ATP is bound by residues lysine 206, glutamate 325, and 352–355 (GGDS).

The protein belongs to the phosphoglycerate kinase family. In terms of assembly, monomer.

It localises to the cytoplasm. It carries out the reaction (2R)-3-phosphoglycerate + ATP = (2R)-3-phospho-glyceroyl phosphate + ADP. The protein operates within carbohydrate degradation; glycolysis; pyruvate from D-glyceraldehyde 3-phosphate: step 2/5. The protein is Phosphoglycerate kinase of Staphylococcus haemolyticus (strain JCSC1435).